The chain runs to 207 residues: MAKTYDYLFKLLLIGDSGVGKTCVLFRFSEDAFNSTFISTIGIDFKIRTIELDGKRIKLQIWDTAGQERFRTITTAYYRGAMGIMLVYDITNEKSFDNIRNWIRNIEEHASADVEKMILGNKCDVNDKRQVSKERGEKLALDYGIKFMETSAKANINVENAFFTLARDIKAKMDKKLEGNSPQGSSHGVKITVEQQKRTSFFRCSLL.

The GTP site is built by serine 17, glycine 18, valine 19, glycine 20, lysine 21, threonine 22, cysteine 23, serine 35, serine 39, and threonine 40. Residue threonine 22 coordinates Mg(2+). 2 consecutive short sequence motifs (switch) follow at residues 31–45 (DAFNSTFISTIGIDF) and 63–80 (DTAGQERFRTITTAYYRG). Residues threonine 40 and aspartate 63 each contribute to the Mg(2+) site. Residue glycine 66 participates in GTP binding. The residue at position 72 (threonine 72) is a Phosphothreonine; by LRRK2. GTP contacts are provided by asparagine 121, lysine 122, aspartate 124, alanine 152, and lysine 153. Residues serine 181 and serine 185 each carry the phosphoserine modification. Cysteine 204 is subject to Cysteine methyl ester. Cysteine 204 is lipidated: S-geranylgeranyl cysteine. Residues 205–207 (SLL) constitute a propeptide, removed in mature form.

Belongs to the small GTPase superfamily. Rab family. As to quaternary structure, interacts (GTP-bound form) with MICALL1; regulates RAB8A association with recycling endosomes. Interacts with MICALL2; competes with RAB13 and is involved in E-cadherin endocytic recycling. Interacts (GTP-bound form) with MICAL1, MICALCL, MICAL3 and EHBP1L1; two molecules of RAB8A can bind to one molecule of the effector protein; ternary complexes of RAB8A, RAB13 and either MICAL1 or EHBP1L1 are possible. Interacts (GTP-bound form) with EHBP1. Interacts with EHD1. Interacts with MAP4K2 and SYTL4. Interacts with SGSM1 and SGSM3. Interacts with RABIF, RIMS2, RPH3A and RPH3A. Interacts with OPTN. Interacts with MYO5B. Interacts with CIMAP3. Interacts with BIRC6/bruce. Interacts with OCRL. Interacts with AHI1. Interacts with DCDC1. Interacts with LRRK2; interaction facilitates phosphorylation of Thr-72. Interacts with RAB31P, GDI1, GDI2, CHM, CHML, RABGGTA, RABGGTB, TBC1D15 and INPP5B; these interactions are dependent on Thr-72 not being phosphorylated. Interacts with RILPL1 and RILPL2; these interactions are dependent on the phosphorylation of Thr-72 by LRRK2. Interacts with DZIP1; prevents inhibition by the GDP-dissociation inhibitor GDI2. Interacts with RAB3IP/Rabin8, RAB3IP functions as guanine exchange factor (GEF) towards RAB8A. Interacts (in GDP-bound form) with RPGR, RPGR functions as GEF towards RAB8A. Mg(2+) is required as a cofactor. Post-translationally, phosphorylation of Thr-72 in the switch II region by LRRK2 prevents the association of RAB regulatory proteins, including CHM, CHML and RAB GDP dissociation inhibitors GDI1 and GDI2. Phosphorylation by LRRK2 is required for localization to stressed lysosomes.

The protein localises to the cell membrane. It localises to the golgi apparatus. The protein resides in the endosome membrane. It is found in the recycling endosome membrane. Its subcellular location is the cell projection. The protein localises to the cilium. It localises to the cytoplasmic vesicle. The protein resides in the phagosome membrane. It is found in the cytoplasm. Its subcellular location is the cytoskeleton. The protein localises to the microtubule organizing center. It localises to the centrosome. The protein resides in the centriole. It is found in the cilium basal body. Its subcellular location is the midbody. The protein localises to the lysosome. It catalyses the reaction GTP + H2O = GDP + phosphate + H(+). Its activity is regulated as follows. Regulated by guanine nucleotide exchange factors (GEFs) such as RAB3IP/Rabin8 and RPGR which promote the exchange of bound GDP for free GTP, GTPase activating proteins (GAPs) which increase the GTP hydrolysis activity, and GDP dissociation inhibitors (GDIs) which inhibit the dissociation of the nucleotide from the GTPase. Activated in response to insulin. The small GTPases Rab are key regulators of intracellular membrane trafficking, from the formation of transport vesicles to their fusion with membranes. Rabs cycle between an inactive GDP-bound form and an active GTP-bound form that is able to recruit to membranes different sets of downstream effectors directly responsible for vesicle formation, movement, tethering and fusion. RAB8A is involved in polarized vesicular trafficking and neurotransmitter release. Together with RAB11A, RAB3IP, the exocyst complex, PARD3, PRKCI, ANXA2, CDC42 and DNMBP promotes transcytosis of PODXL to the apical membrane initiation sites (AMIS), apical surface formation and lumenogenesis. Regulates the compacted morphology of the Golgi. Together with MYO5B and RAB11A participates in epithelial cell polarization. Also involved in membrane trafficking to the cilium and ciliogenesis. Together with MICALL2, may also regulate adherens junction assembly. May play a role in insulin-induced transport to the plasma membrane of the glucose transporter GLUT4 and therefore play a role in glucose homeostasis. Involved in autophagy. Participates in the export of a subset of neosynthesized proteins through a Rab8-Rab10-Rab11-dependent endososomal export route. Targeted to and stabilized on stressed lysosomes through LRRK2 phosphorylation. Suppresses stress-induced lysosomal enlargement through EHBP1 and EHNP1L1 effector proteins. This is Ras-related protein Rab-8A from Mus musculus (Mouse).